The chain runs to 449 residues: Phosphoglucosamine mutase (449 aa).

S104 serves as the catalytic Phosphoserine intermediate. 4 residues coordinate Mg(2+): S104, D243, D245, and D247. S104 is modified (phosphoserine).

The protein belongs to the phosphohexose mutase family. Requires Mg(2+) as cofactor. Activated by phosphorylation.

It carries out the reaction alpha-D-glucosamine 1-phosphate = D-glucosamine 6-phosphate. Functionally, catalyzes the conversion of glucosamine-6-phosphate to glucosamine-1-phosphate. This chain is Phosphoglucosamine mutase, found in Xanthomonas euvesicatoria pv. vesicatoria (strain 85-10) (Xanthomonas campestris pv. vesicatoria).